The chain runs to 100 residues: Urease subunit gamma (100 aa).

It belongs to the urease gamma subunit family. Heterotrimer of UreA (gamma), UreB (beta) and UreC (alpha) subunits. Three heterotrimers associate to form the active enzyme.

It localises to the cytoplasm. The catalysed reaction is urea + 2 H2O + H(+) = hydrogencarbonate + 2 NH4(+). The protein operates within nitrogen metabolism; urea degradation; CO(2) and NH(3) from urea (urease route): step 1/1. This Burkholderia cenocepacia (strain ATCC BAA-245 / DSM 16553 / LMG 16656 / NCTC 13227 / J2315 / CF5610) (Burkholderia cepacia (strain J2315)) protein is Urease subunit gamma.